The sequence spans 152 residues: Deoxyuridine 5'-triphosphate nucleotidohydrolase (152 aa).

Residues 71–73 (RSG), N84, 88–90 (LID), and M98 each bind substrate.

It belongs to the dUTPase family. Requires Mg(2+) as cofactor.

It catalyses the reaction dUTP + H2O = dUMP + diphosphate + H(+). It participates in pyrimidine metabolism; dUMP biosynthesis; dUMP from dCTP (dUTP route): step 2/2. Its function is as follows. This enzyme is involved in nucleotide metabolism: it produces dUMP, the immediate precursor of thymidine nucleotides and it decreases the intracellular concentration of dUTP so that uracil cannot be incorporated into DNA. The polypeptide is Deoxyuridine 5'-triphosphate nucleotidohydrolase (Shewanella denitrificans (strain OS217 / ATCC BAA-1090 / DSM 15013)).